The chain runs to 95 residues: Aspartyl/glutamyl-tRNA(Asn/Gln) amidotransferase subunit C (95 aa).

This sequence belongs to the GatC family. Heterotrimer of A, B and C subunits.

The catalysed reaction is L-glutamyl-tRNA(Gln) + L-glutamine + ATP + H2O = L-glutaminyl-tRNA(Gln) + L-glutamate + ADP + phosphate + H(+). It carries out the reaction L-aspartyl-tRNA(Asn) + L-glutamine + ATP + H2O = L-asparaginyl-tRNA(Asn) + L-glutamate + ADP + phosphate + 2 H(+). Its function is as follows. Allows the formation of correctly charged Asn-tRNA(Asn) or Gln-tRNA(Gln) through the transamidation of misacylated Asp-tRNA(Asn) or Glu-tRNA(Gln) in organisms which lack either or both of asparaginyl-tRNA or glutaminyl-tRNA synthetases. The reaction takes place in the presence of glutamine and ATP through an activated phospho-Asp-tRNA(Asn) or phospho-Glu-tRNA(Gln). The sequence is that of Aspartyl/glutamyl-tRNA(Asn/Gln) amidotransferase subunit C from Nitrosospira multiformis (strain ATCC 25196 / NCIMB 11849 / C 71).